Reading from the N-terminus, the 578-residue chain is CTP synthase 2 (578 aa).

The Glutamine amidotransferase type-1 domain maps to 305–564 (KIALVGKYTN…VAAASGTLGE (260 aa)). Active-site for GATase activity residues include Cys404, His537, and Glu539.

Belongs to the CTP synthase family. In terms of assembly, homodimer. Oligomerizes to a tetramer in the presence of its substrates UTP and ATP. Requires Mg(2+) as cofactor.

The protein localises to the cytoplasm. The catalysed reaction is UTP + L-glutamine + ATP + H2O = CTP + L-glutamate + ADP + phosphate + 2 H(+). It participates in pyrimidine metabolism; CTP biosynthesis via de novo pathway; CTP from UDP: step 2/2. With respect to regulation, activated by GTP. Subject to allosteric product inhibition by CTP. Inhibited by p-chloromercuriphenylsulfonic acid, N-ethylmaleimide and cyclopentenylcytosine (CPEC). Its function is as follows. Catalyzes the ATP-dependent amination of UTP to CTP with either L-glutamine or ammonia as the source of nitrogen. Plays an important role in the regulation of phospholipid synthesis. The protein is CTP synthase 2 (URA8) of Saccharomyces cerevisiae (strain ATCC 204508 / S288c) (Baker's yeast).